The sequence spans 310 residues: Olfactory receptor 5T7 (310 aa).

Over 1–23 (MENITEVTEFILMGFTDNADLEI) the chain is Extracellular. Asn3 is a glycosylation site (N-linked (GlcNAc...) asparagine). A helical membrane pass occupies residues 24–44 (LSFFLFLAIYLFTLMGNLGLI). The Cytoplasmic portion of the chain corresponds to 45–52 (TLVIGDSR). A helical membrane pass occupies residues 53 to 73 (LHNPMYYFLSVLSSVDACYST). At 74–97 (VITPQMVVDFVSEKKVISFIGCAT) the chain is on the extracellular side. Cys95 and Cys187 are disulfide-bonded. Residues 98–118 (QMFLAVTFGTTECFLLAAMAY) form a helical membrane-spanning segment. Residues 119–131 (DRYVAIHNPLMYV) are Cytoplasmic-facing. A helical transmembrane segment spans residues 132 to 152 (VSMSPRVYVPLIIASYAGGIL). Over 153 to 194 (HAVIHTVATFRLSFCGSNKISHIFCDIPPLLAISCSDTHFNQ) the chain is Extracellular. The helical transmembrane segment at 195–215 (LLLFYCAGFIEVVTILIVLLS) threads the bilayer. The Cytoplasmic segment spans residues 216-235 (YGFILSVILKTRSTEGKRKV). The helical transmembrane segment at 236 to 256 (FSTCGSHLMAVSTFHGTVLFM) threads the bilayer. At 257-269 (YVRPSDSYALEHD) the chain is on the extracellular side. Residues 270–290 (MMVSIFYSIVIPMLNPLIYSL) form a helical membrane-spanning segment. The Cytoplasmic segment spans residues 291 to 310 (RNKDVKEAIKKVFGKRILCG).

The protein belongs to the G-protein coupled receptor 1 family.

The protein resides in the cell membrane. In terms of biological role, potential odorant receptor. The chain is Olfactory receptor 5T7 from Mus musculus (Mouse).